The chain runs to 102 residues: Putative defensin-like protein 298 (102 aa).

The N-terminal stretch at 1–29 (MSASKATMLILFALFLSDILLVSIPRAEA) is a signal peptide. 6 disulfide bridges follow: cysteine 35–cysteine 53, cysteine 41–cysteine 58, cysteine 46–cysteine 60, cysteine 74–cysteine 93, cysteine 80–cysteine 98, and cysteine 86–cysteine 100.

Belongs to the DEFL family.

The protein localises to the secreted. The protein is Putative defensin-like protein 298 of Arabidopsis thaliana (Mouse-ear cress).